We begin with the raw amino-acid sequence, 332 residues long: 30 kDa heat shock protein (332 aa).

Residues 1 to 34 lie on the Extracellular side of the membrane; the sequence is MNDTLSSFLNRNEALGLNPPHGLDMHITKRGSDW. A helical membrane pass occupies residues 35 to 55; sequence LWAVFAVFGFILLCYVVMFFI. Residues 56 to 65 lie on the Cytoplasmic side of the membrane; sequence AENKGSRLTR. Residues 66–86 form a helical membrane-spanning segment; the sequence is YALAPAFLITFFEFFAFFTYA. Residues 87–121 are Extracellular-facing; the sequence is SDLGWTGVQAEFNHVKVSKSITGEVPGIRQIFYSK. The helical transmembrane segment at 122–142 threads the bilayer; sequence YIAWFLSWPCLLFLIELAAST. Over 143–157 the chain is Cytoplasmic; that stretch reads TGENDDISALDMVHS. The chain crosses the membrane as a helical span at residues 158–178; the sequence is LLIQIVGTLFWVVSLLVGSLI. Residues 179–181 are Extracellular-facing; that stretch reads KST. A helical membrane pass occupies residues 182-202; the sequence is YKWGYYTIGAVAMLVTQGVIC. Topologically, residues 203-215 are cytoplasmic; that stretch reads QRQFFNLKTRGFN. Residues 216–236 traverse the membrane as a helical segment; that stretch reads ALMLCTCMVIVWLYFICWGLS. The Extracellular portion of the chain corresponds to 237–248; that stretch reads DGGNRIQPDGEA. Residues 249 to 269 form a helical membrane-spanning segment; the sequence is IFYGVLDLCVFAIYPCYLLIA. Residues 270–332 are Cytoplasmic-facing; the sequence is VSRDGKLPRL…EAEQAVEDTA (63 aa). The segment at 290 to 332 is disordered; the sequence is ATDDVEDAAPETKEAVPESPRASGETAIHEPEPEAEQAVEDTA. Serine 308 is subject to Phosphoserine. Residues 322–332 are compositionally biased toward acidic residues; it reads PEAEQAVEDTA. The residue at position 331 (threonine 331) is a Phosphothreonine.

The protein belongs to the archaeal/bacterial/fungal opsin family.

The protein resides in the membrane. Its function is as follows. Probably cooperates with other heat shock proteins in the translocation of polypeptides through membranes. It may counteract the altering effect of heat shock on the plasma membrane. This Saccharomyces cerevisiae (strain ATCC 204508 / S288c) (Baker's yeast) protein is 30 kDa heat shock protein (HSP30).